We begin with the raw amino-acid sequence, 2517 residues long: Protein capicua homolog (2517 aa).

Disordered stretches follow at residues 1–197, 300–325, 342–483, 531–579, 608–640, and 658–767; these read MKPM…SGSY, LSPGPSSQPGLPGSLPQPPQPLHREP, PWEP…KYKK, EMEG…RGDS, SSRSGTPSFSPVSTQSPFSPAPSPSPSPLFGFR, and VRSR…FRAV. The span at 57–67 shows a compositional bias: acidic residues; that stretch reads EEAEEGEEEEA. Positions 91-101 are enriched in basic and acidic residues; that stretch reads EDPKGDGEAGR. Composition is skewed to low complexity over residues 158–167 and 300–313; these read TSTRSSSTDT and LSPGPSSQPGLPGS. The segment covering 396 to 405 has biased composition (basic and acidic residues); it reads HCEEGEEKHP. Residues 414 to 428 are compositionally biased toward pro residues; that stretch reads LPLPPPQLLSPPPKS. A compositionally biased stretch (low complexity) spans 451–477; that stretch reads GSRSSSVASLEKGTAPAARARTPLTAA. The span at 608–619 shows a compositional bias: polar residues; the sequence is SSRSGTPSFSPV. Pro residues predominate over residues 677–686; it reads DLGPHPPPPA. Positions 698 to 707 are enriched in polar residues; it reads TFQTNLTFTV. Residues 726–735 are compositionally biased toward gly residues; the sequence is GAPGAGGGGA. Phosphoserine is present on residues Ser-776 and Ser-780. Disordered regions lie at residues 812-842, 955-1110, 1179-1220, 1235-1274, 1290-1347, 1379-1539, and 1595-1628; these read IVRNPDVPLPSKFPGEVGTAGEVRAGGPGRG, PSQP…DHIR, CNKD…APGV, SDTKAPGSSSCGAERLHTVGGPGSARPRAFSHSGVHSLDG, SGPA…TSDE, RVTD…ILQT, and IASKPFPTSGRAEASPNDTAGARTEMGTGSRVPG. The tract at residues 937 to 955 is interaction with ATXN1; sequence EPRSVAVFPWHSLVPFLAP. The segment covering 959–981 has biased composition (polar residues); that stretch reads DPSVQPSEAQQPASHPVASNQSK. Phosphoserine is present on residues Ser-1055 and Ser-1082. 3 stretches are compositionally biased toward basic and acidic residues: residues 1087 to 1110, 1179 to 1188, and 1200 to 1209; these read PKERDSSSEKDGRSPNKREKDHIR, CNKDRKKSSS, and GHKETRERSM. Omega-N-methylarginine is present on Arg-1099. Positions 1109–1177 form a DNA-binding region, HMG box; the sequence is IRRPMNAFMI…AHFKAHPDWK (69 aa). Ser-1186 carries the phosphoserine modification. Residues 1235–1245 are compositionally biased toward polar residues; that stretch reads SDTKAPGSSSC. Residue Ser-1271 is modified to Phosphoserine. Residues 1305 to 1323 show a composition bias toward low complexity; sequence GAPGPFAAPGEGGALAATG. A phosphoserine mark is found at Ser-1340, Ser-1345, and Ser-1405. Residues 1418–1430 show a composition bias toward pro residues; it reads PLDPEPPGPPDPP. The segment covering 1439 to 1456 has biased composition (low complexity); sequence SAPSSSASSPASSSASAA. Over residues 1457-1474 the composition is skewed to polar residues; sequence TSFSLGSGTFKAQESGQG. 3 positions are modified to phosphoserine: Ser-1609, Ser-1630, and Ser-1648. Arg-1772 carries the post-translational modification Asymmetric dimethylarginine. Positions 1799-1818 are disordered; the sequence is QSVPSAPPPKAQSVSPVQAP. Residue Arg-1843 is modified to Omega-N-methylarginine. 3 disordered regions span residues 2039–2064, 2100–2342, and 2430–2517; these read AATILPKGPPAPATATPAPTSPFPSA, SFEA…AKCE, and AATP…ATGR. Residues 2051-2064 show a composition bias toward low complexity; it reads ATATPAPTSPFPSA. 2 stretches are compositionally biased toward pro residues: residues 2110 to 2119 and 2136 to 2145; these read GPAPRQPLEP and PTPPAPPPLP. Low complexity predominate over residues 2146-2155; sequence ETWTPTARSS. An N6-acetyllysine modification is found at Lys-2177. Pro residues predominate over residues 2198–2209; it reads PPTPPSPAPAPA. Phosphothreonine is present on Thr-2200. Ser-2203 carries the post-translational modification Phosphoserine. Over residues 2210–2225 the composition is skewed to low complexity; that stretch reads VAPGGSSESSSGRAAG. The span at 2249–2278 shows a compositional bias: basic and acidic residues; sequence KTFDSVDNRVLSEVDFEERFAELPEFRPEE. Phosphoserine is present on residues Ser-2260, Ser-2282, Ser-2287, Ser-2291, Ser-2298, and Ser-2306. Thr-2307 bears the Phosphothreonine mark. Residues Ser-2311 and Ser-2318 each carry the phosphoserine modification. Over residues 2457 to 2469 the composition is skewed to pro residues; the sequence is APTPSPAGGPDPT. Ser-2504 is subject to Phosphoserine.

Found in a complex with ATXN1 and ATXN1L. As to quaternary structure, interacts with ATXN1. In terms of tissue distribution, expressed in fetal brain.

Its subcellular location is the nucleus. Its function is as follows. Transcriptional repressor which plays a role in development of the central nervous system (CNS). In concert with ATXN1 and ATXN1L, involved in brain development. The polypeptide is Protein capicua homolog (CIC) (Homo sapiens (Human)).